We begin with the raw amino-acid sequence, 216 residues long: Pyrrolidone-carboxylate peptidase (216 aa).

Active-site residues include E80, C143, and H168.

It belongs to the peptidase C15 family. As to quaternary structure, homotetramer.

The protein resides in the cytoplasm. It catalyses the reaction Release of an N-terminal pyroglutamyl group from a polypeptide, the second amino acid generally not being Pro.. Its function is as follows. Removes 5-oxoproline from various penultimate amino acid residues except L-proline. In Cupriavidus necator (strain ATCC 17699 / DSM 428 / KCTC 22496 / NCIMB 10442 / H16 / Stanier 337) (Ralstonia eutropha), this protein is Pyrrolidone-carboxylate peptidase.